Reading from the N-terminus, the 358-residue chain is Homer protein homolog 3 (358 aa).

Residues 1 to 80 (MSTAREQPIF…TKTSQKFGQW (80 aa)) form a required for interaction with NFATC2 region. In terms of domain architecture, WH1 spans 1-113 (MSTAREQPIF…EKFQEVKEAA (113 aa)). Residues 95–122 (SEQQLTQFAEKFQEVKEAARLAREKSQD) adopt a coiled-coil conformation. S120 and S158 each carry phosphoserine. 2 disordered regions span residues 137–168 (QVPP…TERE) and 239–296 (AEPV…QVQD). Residues 190–355 (ALQDSNQRLA…LREGLARLAE (166 aa)) adopt a coiled-coil conformation. A compositionally biased stretch (basic and acidic residues) spans 257-267 (LEARVQTKDQE). Residues 268 to 277 (IQTLKNQSTG) show a composition bias toward polar residues. Basic and acidic residues predominate over residues 280-290 (EAPDTAEREET).

The protein belongs to the Homer family. Tetramer. Encodes coiled-coil structures that mediate homo- and heteromultimerization. Interacts with NFATC2; interaction is calcium independent; interaction competes with PPP3CA for NFATC2 binding; interaction is reduced by AKT activation. Interacts with NFATC1 and NFATC4. Interacts with SHANK1; forms a high-order complex at least composed of SHANK1 and HOMER3; the complex formation is regulated by CAMK2A-mediated phosphorylation.

It is found in the cytoplasm. The protein localises to the postsynaptic density. It localises to the synapse. Postsynaptic density scaffolding protein. Binds and cross-links cytoplasmic regions of GRM1, GRM5, ITPR1, DNM3, RYR1, RYR2, SHANK1 and SHANK3. By physically linking GRM1 and GRM5 with ER-associated ITPR1 receptors, it aids the coupling of surface receptors to intracellular calcium release. Negatively regulates T cell activation by inhibiting the calcineurin-NFAT pathway. Acts by competing with calcineurin/PPP3CA for NFAT protein binding, hence preventing NFAT activation by PPP3CA. This is Homer protein homolog 3 from Rattus norvegicus (Rat).